Consider the following 617-residue polypeptide: DNA-(apurinic or apyrimidinic site) endonuclease (617 aa).

The tract at residues 74-99 (IKNSDEQNNSNNNNNNSSSSNFCSNN) is disordered. Residues 81–99 (NNSNNNNNNSSSSNFCSNN) are compositionally biased toward low complexity. 2 residues coordinate Mg(2+): N284 and E317. The disordered stretch occupies residues 326-349 (SEPCDNKNKNKNKNDGIRDRGKIK). A compositionally biased stretch (basic and acidic residues) spans 329–349 (CDNKNKNKNKNDGIRDRGKIK). Positions 474, 476, 606, and 607 each coordinate Mg(2+). The active-site Proton acceptor is H607.

It belongs to the DNA repair enzymes AP/ExoA family. It depends on Mg(2+) as a cofactor. Requires Mn(2+) as cofactor. May be proteolytically cleaved into a 64 kDa form.

It localises to the mitochondrion. It carries out the reaction Exonucleolytic cleavage in the 3'- to 5'-direction to yield nucleoside 5'-phosphates.. Its activity is regulated as follows. Apurinic/apyrimidinic (AP) endonuclease activity is maximal at low Mg(2+) (0.5-2 mM) with no activity seen at high concentrations (more than 10 mM). 3'-5' exonuclease activity is maximal in the range of 0.5-2 mM Mg(2+) with activity seen up to 10 mM Mg(2+). In terms of biological role, multifunctional protein that plays a central role in mitochondrial DNA base excision repair (BER) pathway induced by oxidative stress. Has apurinic/apyrimidinic (AP) endonuclease activity towards double-stranded DNA (dsDNA). Has nucleotide incision repair (NIR) activity; acts on dsDNA with oxidized bases thymine glycol and 5,6-dihydro-2'-deoxyuridine. Has 3'-5' exonuclease; can use dsDNA templates with 3'-OH termini including blunt-end, gapped and mismatched 3'-recessed. Has 3'-phosphatase activity; cleaves 3'-phosphate from blunt, recessed and gapped dsDNA templates, followed by 3'-5' exonuclease activity. Has RNase H-like activity; cleaves RNA on 3'-recessed RNA-DNA duplex. Plays a role in merosome infection of host erythrocytes. This is DNA-(apurinic or apyrimidinic site) endonuclease from Plasmodium falciparum (isolate 3D7).